The sequence spans 744 residues: Tripartite motif-containing protein 2 (744 aa).

Ser-10 bears the Phosphoserine mark. An RING-type zinc finger spans residues 23 to 64; sequence CSICLERYKNPKVLPCLHTFCERCLQNYIPAHSLTLSCPVCR. The segment at 113-154 adopts a B box-type zinc-finger fold; it reads GKPLSCPNHDGNVMEFYCQSCETAMCRECTEGEHAEHPTVPL. Zn(2+) is bound by residues Cys-118, His-121, Cys-141, and His-146. Residues 320 to 421 form a Filamin repeat; that stretch reads TTNAVASETV…IRGSPFKLKV (102 aa). A Phosphothreonine modification is found at Thr-371. Residues Ser-375, Ser-424, and Ser-428 each carry the phosphoserine modification. Positions 432–462 are disordered; it reads EGVKRRVKSPGSGHVKQKAVKRPASMYSTGK. NHL repeat units lie at residues 473–516, 520–563, 564–605, 609–652, 656–699, and 700–743; these read IFRV…FSND, KSRF…FSSD, GKFK…FQPN, VTRF…FNQE, MLKF…FDGS, and GSFL…YRYL.

Belongs to the TRIM/RBCC family. As to quaternary structure, forms homooligomers. Interacts with TRIM3; this interaction reduces TRIM2 activity. Interacts with myosin V; myosin V may not be a substrate for ubiquitination. Interacts with NEFL. Interacts with phosphorylated BCL2L11. Interacts with SIRPA. In terms of processing, RING-type zinc finger-dependent and UBE2D1-dependent autoubiquitination.

The protein resides in the cytoplasm. It carries out the reaction S-ubiquitinyl-[E2 ubiquitin-conjugating enzyme]-L-cysteine + [acceptor protein]-L-lysine = [E2 ubiquitin-conjugating enzyme]-L-cysteine + N(6)-ubiquitinyl-[acceptor protein]-L-lysine.. Its pathway is protein modification; protein ubiquitination. Its function is as follows. UBE2D1-dependent E3 ubiquitin-protein ligase that mediates the ubiquitination of NEFL and of phosphorylated BCL2L11. Plays a neuroprotective function. May play a role in neuronal rapid ischemic tolerance. Plays a role in antiviral immunity and limits New World arenavirus infection independently of its ubiquitin ligase activity. The sequence is that of Tripartite motif-containing protein 2 (TRIM2) from Homo sapiens (Human).